The following is a 252-amino-acid chain: 2-succinyl-6-hydroxy-2,4-cyclohexadiene-1-carboxylate synthase (252 aa).

It belongs to the AB hydrolase superfamily. MenH family. In terms of assembly, monomer.

The enzyme catalyses 5-enolpyruvoyl-6-hydroxy-2-succinyl-cyclohex-3-ene-1-carboxylate = (1R,6R)-6-hydroxy-2-succinyl-cyclohexa-2,4-diene-1-carboxylate + pyruvate. Its pathway is quinol/quinone metabolism; 1,4-dihydroxy-2-naphthoate biosynthesis; 1,4-dihydroxy-2-naphthoate from chorismate: step 3/7. It participates in quinol/quinone metabolism; menaquinone biosynthesis. In terms of biological role, catalyzes a proton abstraction reaction that results in 2,5-elimination of pyruvate from 2-succinyl-5-enolpyruvyl-6-hydroxy-3-cyclohexene-1-carboxylate (SEPHCHC) and the formation of 2-succinyl-6-hydroxy-2,4-cyclohexadiene-1-carboxylate (SHCHC). The chain is 2-succinyl-6-hydroxy-2,4-cyclohexadiene-1-carboxylate synthase from Salmonella choleraesuis (strain SC-B67).